A 461-amino-acid polypeptide reads, in one-letter code: uncharacterized protein (461 aa).

Residues 86–127 (KMKPNKDDDEEEDEDDEDDEDDEEEDNEEEDNEEENEITIAP) are disordered. The segment covering 92–122 (DDDEEEDEDDEDDEDDEEEDNEEEDNEEENE) has biased composition (acidic residues). 2 coiled-coil regions span residues 95–123 (EEEDEDDEDDEDDEEEDNEEEDNEEENEI) and 405–459 (NKYI…KLKK).

The protein belongs to the mimivirus L5 family.

This is an uncharacterized protein from Acanthamoeba polyphaga mimivirus (APMV).